The primary structure comprises 167 residues: UPF0178 protein bll3966 (167 aa).

The protein belongs to the UPF0178 family.

The polypeptide is UPF0178 protein bll3966 (Bradyrhizobium diazoefficiens (strain JCM 10833 / BCRC 13528 / IAM 13628 / NBRC 14792 / USDA 110)).